We begin with the raw amino-acid sequence, 336 residues long: Glycerol-3-phosphate dehydrogenase [NAD(P)+] (336 aa).

Ser-16, Tyr-17, His-37, and Lys-111 together coordinate NADPH. Lys-111, Gly-140, and Thr-142 together coordinate sn-glycerol 3-phosphate. Residue Ala-144 coordinates NADPH. Sn-glycerol 3-phosphate-binding residues include Lys-196, Asp-249, Ser-259, Arg-260, and Asn-261. Lys-196 (proton acceptor) is an active-site residue. An NADPH-binding site is contributed by Arg-260. NADPH-binding residues include Val-284 and Glu-286.

Belongs to the NAD-dependent glycerol-3-phosphate dehydrogenase family.

It localises to the cytoplasm. The enzyme catalyses sn-glycerol 3-phosphate + NAD(+) = dihydroxyacetone phosphate + NADH + H(+). The catalysed reaction is sn-glycerol 3-phosphate + NADP(+) = dihydroxyacetone phosphate + NADPH + H(+). The protein operates within membrane lipid metabolism; glycerophospholipid metabolism. Functionally, catalyzes the reduction of the glycolytic intermediate dihydroxyacetone phosphate (DHAP) to sn-glycerol 3-phosphate (G3P), the key precursor for phospholipid synthesis. The protein is Glycerol-3-phosphate dehydrogenase [NAD(P)+] of Actinobacillus pleuropneumoniae serotype 3 (strain JL03).